We begin with the raw amino-acid sequence, 122 residues long: Large ribosomal subunit protein uL14 (122 aa).

This sequence belongs to the universal ribosomal protein uL14 family. As to quaternary structure, part of the 50S ribosomal subunit. Forms a cluster with proteins L3 and L19. In the 70S ribosome, L14 and L19 interact and together make contacts with the 16S rRNA in bridges B5 and B8.

Its function is as follows. Binds to 23S rRNA. Forms part of two intersubunit bridges in the 70S ribosome. The chain is Large ribosomal subunit protein uL14 from Pseudomonas fluorescens (strain ATCC BAA-477 / NRRL B-23932 / Pf-5).